We begin with the raw amino-acid sequence, 330 residues long: DNA primase small subunit PriS (330 aa).

Residues Asp-101 and Asp-103 contribute to the active site. Zn(2+)-binding residues include Cys-116, Cys-119, Cys-128, and Asp-131. Asp-235 is an active-site residue.

It belongs to the eukaryotic-type primase small subunit family. As to quaternary structure, heterodimer of a small subunit (PriS) and a large subunit (PriL). Mg(2+) is required as a cofactor. Mn(2+) serves as cofactor.

Functionally, catalytic subunit of DNA primase, an RNA polymerase that catalyzes the synthesis of short RNA molecules used as primers for DNA polymerase during DNA replication. The small subunit contains the primase catalytic core and has DNA synthesis activity on its own. Binding to the large subunit stabilizes and modulates the activity, increasing the rate of DNA synthesis while decreasing the length of the DNA fragments, and conferring RNA synthesis capability. The DNA polymerase activity may enable DNA primase to also catalyze primer extension after primer synthesis. May also play a role in DNA repair. This Saccharolobus islandicus (strain M.16.27) (Sulfolobus islandicus) protein is DNA primase small subunit PriS.